We begin with the raw amino-acid sequence, 443 residues long: CBL-interacting protein kinase 2 (443 aa).

A Protein kinase domain is found at 13-267 (YEMGKLLGQG…MDKIMENPWF (255 aa)). ATP is bound by residues 19–27 (LGQGTFAKV) and K42. Catalysis depends on D135, which acts as the Proton acceptor. Residues 153 to 182 (DFGLSALADCKRQDGLLHTTCGTPAYVAPE) form an activation loop region. The NAF domain occupies 302 to 329 (TLEKKPSNLNAFDIISLSTGLDLSGMFE). A PPI region spans residues 333 to 362 (KKESKFTSTSTASTIISKIEDIAKGLRLKL).

The protein belongs to the protein kinase superfamily. CAMK Ser/Thr protein kinase family. SNF1 subfamily. Mn(2+) is required as a cofactor.

The catalysed reaction is L-seryl-[protein] + ATP = O-phospho-L-seryl-[protein] + ADP + H(+). It carries out the reaction L-threonyl-[protein] + ATP = O-phospho-L-threonyl-[protein] + ADP + H(+). CIPK serine-threonine protein kinases interact with CBL proteins. Binding of a CBL protein to the regulatory NAF domain of CIPK protein lead to the activation of the kinase in a calcium-dependent manner. This Oryza sativa subsp. japonica (Rice) protein is CBL-interacting protein kinase 2 (CIPK2).